The primary structure comprises 390 residues: MGIKGLAKLLSDEAPLSLKEVPLSHLHGRKLAIDASMAIYQFLIAVRSGGPGGQNAAMMLTNADGETTSHIQGIFNRTIRFISEGIRPVYVFDGKPPQFKSGELLKRREKRLKAEQALKAAEESGNIEEQDKQSKRLVRAGTKENEDCIKLLTLMGVPVIRAPCEAEAQAAALARSGKVYAAATEDMDALTFRSPVMVRKMTFANASKSDVQQIFYDKAIEGLEITHDQFVDLCILLGCDYCDTIKGIGPKTALKLIREHKNIETILKHLNREKYVVPDIYVEARRLFNHHEVLPDNEIELKWTECQPEPLKSFLVDEMGFNPDRVQASIEKLQKAFKASAKPQSRMDSFFKVKANPEGDKKKAEKRKAELAASRGKGKKGKGGGGFKKK.

Positions 1-111 are N-domain; it reads MGIKGLAKLL…GELLKRREKR (111 aa). Residue D34 participates in Mg(2+) binding. 2 residues coordinate DNA: R47 and R77. 5 residues coordinate Mg(2+): D93, E165, E167, D186, and D188. Residues 129–260 form an I-domain region; that stretch reads EQDKQSKRLV…KTALKLIREH (132 aa). E165 provides a ligand contact to DNA. DNA contacts are provided by G238 and D240. Mg(2+) is bound at residue D240. Residues 342 to 390 are disordered; it reads KPQSRMDSFFKVKANPEGDKKKAEKRKAELAASRGKGKKGKGGGGFKKK. An interaction with PCNA region spans residues 343–351; the sequence is PQSRMDSFF. The segment covering 349 to 370 has biased composition (basic and acidic residues); that stretch reads SFFKVKANPEGDKKKAEKRKAE. Residues 376–390 show a composition bias toward basic residues; that stretch reads GKGKKGKGGGGFKKK.

Belongs to the XPG/RAD2 endonuclease family. FEN1 subfamily. Interacts with PCNA. Three molecules of FEN1 bind to one PCNA trimer with each molecule binding to one PCNA monomer. PCNA stimulates the nuclease activity without altering cleavage specificity. Mg(2+) is required as a cofactor. Phosphorylated. Phosphorylation upon DNA damage induces relocalization to the nuclear plasma.

The protein resides in the nucleus. Its subcellular location is the nucleolus. The protein localises to the nucleoplasm. It localises to the mitochondrion. In terms of biological role, structure-specific nuclease with 5'-flap endonuclease and 5'-3' exonuclease activities involved in DNA replication and repair. During DNA replication, cleaves the 5'-overhanging flap structure that is generated by displacement synthesis when DNA polymerase encounters the 5'-end of a downstream Okazaki fragment. It enters the flap from the 5'-end and then tracks to cleave the flap base, leaving a nick for ligation. Also involved in the long patch base excision repair (LP-BER) pathway, by cleaving within the apurinic/apyrimidinic (AP) site-terminated flap. Acts as a genome stabilization factor that prevents flaps from equilibrating into structures that lead to duplications and deletions. Also possesses 5'-3' exonuclease activity on nicked or gapped double-stranded DNA, and exhibits RNase H activity. Also involved in replication and repair of rDNA and in repairing mitochondrial DNA. This Thalassiosira pseudonana (Marine diatom) protein is Flap endonuclease 1.